Reading from the N-terminus, the 1028-residue chain is Kinesin-like protein KIF28 (1028 aa).

Positions 11 to 358 (SVRVAVRVRP…LRYAERAKKV (348 aa)) constitute a Kinesin motor domain. Residue 114-121 (GQTGSGKS) participates in ATP binding. Residues 460–523 (CDVGRAASNA…LQHLDRIILG (64 aa)) enclose the FHA domain. The stretch at 873-902 (NQVPELYQKLLKLEQETELLRDVNRALRGE) forms a coiled coil.

The protein belongs to the TRAFAC class myosin-kinesin ATPase superfamily. Kinesin family.

It is found in the mitochondrion membrane. Its function is as follows. Microtubule-dependent motor protein required for mitochondrion morphology and transport of mitochondria in neuronal cells. The polypeptide is Kinesin-like protein KIF28 (Mus musculus (Mouse)).